Consider the following 437-residue polypeptide: GTPase Era, mitochondrial (437 aa).

The N-terminal 43 residues, 1-43 (MAASSWRGAVLLRTVSGLWQAGPDAAREWMTRLPSLLGFQQRC), are a transit peptide targeting the mitochondrion. The Era-type G domain maps to 112-330 (RVLRVVLLGA…QYLLAQARPG (219 aa)). Residues 120–127 (GAPNAGKS) form a G1 region. GTP is bound at residue 120 to 127 (GAPNAGKS). Residues 146 to 150 (HTTRS) form a G2 region. A G3 region spans residues 167-170 (DTPG). 167-171 (DTPGL) is a GTP binding site. At Ser173 the chain carries Phosphoserine. A GTP-binding site is contributed by 236 to 239 (NKVD). The tract at residues 236-239 (NKVD) is G4. A disordered region spans residues 264 to 296 (LKTKQALRSRPDTHCPSPAAQGPNPQPVRDPQQ). Positions 308–310 (LSA) are G5. In terms of domain architecture, KH type-2 spans 360-437 (LPEEVPYNVQ…QLRLSVKLLK (78 aa)).

This sequence belongs to the TRAFAC class TrmE-Era-EngA-EngB-Septin-like GTPase superfamily. Era GTPase family.

The protein resides in the mitochondrion matrix. It localises to the mitochondrion inner membrane. Probable GTPase that plays a role in the mitochondrial ribosomal small subunit assembly. Specifically binds the 12S mitochondrial rRNA (12S mt-rRNA) to a 33 nucleotide section delineating the 3' terminal stem-loop region. May act as a chaperone that protects the 12S mt-rRNA on the 28S mitoribosomal subunit during ribosomal small subunit assembly. In Bos taurus (Bovine), this protein is GTPase Era, mitochondrial (ERAL1).